The primary structure comprises 351 residues: Phosphatidylinositol transfer protein PDR16 (351 aa).

Residues 135–295 form the CRAL-TRIO domain; the sequence is LVAVENESGK…LYGGDLKFKY (161 aa).

As to quaternary structure, homodimer. Apo-SFH3 forms a dimer through the hydrophobic interaction of gating helices. Binding of phosphatidylinositol leads to dissociation of the dimer into monomers in a reversible manner.

The protein resides in the lipid droplet. It localises to the microsome membrane. The protein localises to the endoplasmic reticulum membrane. It carries out the reaction a 1,2-diacyl-sn-glycero-3-phospho-(1D-myo-inositol)(in) = a 1,2-diacyl-sn-glycero-3-phospho-(1D-myo-inositol)(out). Has phosphatidylinositol transfer activity. Involved in the regulation of the phospholipid composition of plasma- and endomembranes. Altering plasma membrane composition may provide a possible mechanism for multidrug resistance. Involved in the regulation of sterol biosynthesis. Contributes to efficient phospholipase D1 activation in the regulation of phospholipid turnover. Regulates the release of fatty acids from lipid droplets. This Saccharomyces cerevisiae (strain ATCC 204508 / S288c) (Baker's yeast) protein is Phosphatidylinositol transfer protein PDR16 (PDR16).